The following is a 616-amino-acid chain: MADDWRQVCETYRRAITLSDVESKNDPENEPYRSKYRARELLREVRVLLCPEEEEESEAEGKEERRDGPESGGRRGESGELLAARLAVVEFRLGLNHTETEEMSAGEEHLVKSGRIMERFRLSEEGVSVYIQAQNNLGILWADRGEIRVAQRYLESAESLYYQYMKEIGKPAIDPDEHFFSEEQKLTEQERTKRFERVYTHTLYYLAQVYKHLKQDEKAAQYCHTTLQRQLEYDSYNPVEWAINAATLSQYYVTKQCYMESRHCLAAANVIFSKAEQIPSAEAAKENEAEQERLDLLRQKKAEIARCWVKYCLNLLQDARKKLEDNIGELDVDIQEELKAQRQKEEDEKEKDRKKAILFGSSDIYDSVQAAEEKVECSHPLDFKEAREVFLVGQNYINESKEYFQLDGHVTDHIEIIQDHSSLFKLLAFFEEDYERRCKMHKRRIDMLEPLCKELNPQYYLLICRQLQFELADTSYEMMDLKVAIGNKLDEMDTHTIKKINSLAQTAIKYYEMFLDSLRSPDQKFPEKLEEDVLRPAMVAKFRIARLYGKLISTDGKIQLENIQKSLNNYKYIVDYCEINKEAIKCIETELELSKEMVALLPTRMERLRIQLASFS.

Positions 52–78 (EEEEESEAEGKEERRDGPESGGRRGES) are disordered. Residues 59 to 78 (AEGKEERRDGPESGGRRGES) are compositionally biased toward basic and acidic residues.

This sequence belongs to the KIF-binding protein family.

Its subcellular location is the cytoplasm. The protein resides in the cytoskeleton. In terms of biological role, activator of KIF1B plus-end-directed microtubule motor activity. Required for organization of axonal microtubules, and axonal outgrowth and maintenance during peripheral and central nervous system development. The protein is KIF-binding protein of Xenopus tropicalis (Western clawed frog).